Reading from the N-terminus, the 249-residue chain is NADH-quinone oxidoreductase subunit C (249 aa).

The segment at 1 to 29 (MTENQTTPDPGEPGSSADRPGGLVPTGDS) is disordered.

This sequence belongs to the complex I 30 kDa subunit family. As to quaternary structure, NDH-1 is composed of 14 different subunits. Subunits NuoB, C, D, E, F, and G constitute the peripheral sector of the complex.

It is found in the cell membrane. The enzyme catalyses a quinone + NADH + 5 H(+)(in) = a quinol + NAD(+) + 4 H(+)(out). Functionally, NDH-1 shuttles electrons from NADH, via FMN and iron-sulfur (Fe-S) centers, to quinones in the respiratory chain. The immediate electron acceptor for the enzyme in this species is believed to be a menaquinone. Couples the redox reaction to proton translocation (for every two electrons transferred, four hydrogen ions are translocated across the cytoplasmic membrane), and thus conserves the redox energy in a proton gradient. The polypeptide is NADH-quinone oxidoreductase subunit C (Saccharopolyspora erythraea (strain ATCC 11635 / DSM 40517 / JCM 4748 / NBRC 13426 / NCIMB 8594 / NRRL 2338)).